We begin with the raw amino-acid sequence, 704 residues long: Phytyl ester synthase 1, chloroplastic (704 aa).

The transit peptide at 1 to 27 (MATCSSSLLVLPNLRLSSNQRRNFKVR) directs the protein to the chloroplast.

It belongs to the diacylglycerol acyltransferase family. In terms of assembly, interacts with PGM48. As to expression, mostly expressed in flowers (e.g. sepals, petals and stamen).

Its subcellular location is the plastid. It localises to the chloroplast. The protein localises to the plastoglobule. It carries out the reaction a 1,2-diacyl-3-O-(beta-D-galactosyl)-sn-glycerol + a 1,2-diacylglycerol = an acyl-3-O-(beta-D-galactosyl)-sn-glycerol + a triacylglycerol. It catalyses the reaction a 1,2-diacylglycerol + a fatty acyl-CoA = a triacylglycerol + CoA. The catalysed reaction is a fatty acyl-[ACP] + a 1,2-diacylglycerol = a triacylglycerol + holo-[ACP]. The enzyme catalyses phytol + a fatty acyl-CoA = a fatty acid phytyl ester + CoA. It carries out the reaction phytol + tetradecanoyl-CoA = tetradecanoate phytyl ester + CoA. It catalyses the reaction a 1,3-diacylglycerol + a fatty acyl-CoA = a triacylglycerol + CoA. The catalysed reaction is 1,2-dihexanoylglycerol + tetradecanoyl-CoA = 1,2-dihexanoyl-3-tetradecanoylglycerol + CoA. The enzyme catalyses 1,2-dihexanoylglycerol + hexadecanoyl-CoA = 1,2-dihexanoyl-3-hexadecanoylglycerol + CoA. It carries out the reaction 1,2-dihexanoylglycerol + octadecanoyl-CoA = 1,2-dihexanoyl-3-octadecanoylglycerol + CoA. It catalyses the reaction (7Z,10Z,13Z)-hexadecatrienoyl-CoA + 1,2-dihexanoylglycerol = 1,2-dihexanoyl-3-(7Z,10Z,13Z-hexadecatrienoyl)-glycerol + CoA. The catalysed reaction is 1,2-dihexanoylglycerol + (9Z)-octadecenoyl-CoA = 1,2-dihexanoyl-3-(9Z-octadecenoyl)-glycerol + CoA. The enzyme catalyses 1,2-dihexanoylglycerol + (9Z,12Z,15Z)-octadecatrienoyl-CoA = 1,2-dihexanoyl-3-(9Z,12Z,15Z-octadecatrienoyl)-glycerol + CoA. It carries out the reaction phytol + decanoyl-CoA = decanoate phytyl ester + CoA. It catalyses the reaction (7Z,10Z,13Z)-hexadecatrienoyl-CoA + phytol = (7Z,10Z,13Z)-hexadecatrienoate phytyl ester + CoA. The catalysed reaction is phytol + dodecanoyl-CoA = dodecanoate phytyl ester + CoA. In terms of biological role, acyltransferase involved in fatty acid phytyl ester synthesis in chloroplasts, a process required for the maintenance of the photosynthetic membrane integrity during abiotic stress and senescence. Exhibits phytyl ester synthesis and diacylglycerol acyltransferase activities with broad substrate specificities, and can employ acyl-CoAs, acyl carrier proteins, and galactolipids as acyl donors. The polypeptide is Phytyl ester synthase 1, chloroplastic (Arabidopsis thaliana (Mouse-ear cress)).